We begin with the raw amino-acid sequence, 443 residues long: Flavastacin (443 aa).

The N-terminal stretch at 1 to 15 (MTRKLLILSGCLILA) is a signal peptide. A propeptide spans 16-91 (LNSCKSDMET…ANPDISTVER (76 aa)) (activation peptide). Residues 92–289 (STIVSSFIKT…AGINHLYGPV (198 aa)) form the Peptidase M12A domain. His189 is a binding site for Zn(2+). Residue Glu190 is part of the active site. Residues His193 and His199 each coordinate Zn(2+). Residues 297–440 (GTYTLTTSLA…PYTKQRFTLT (144 aa)) enclose the Ricin B-type lectin domain. A glycan (O-linked (Man...) serine) is linked at Ser355.

Requires Zn(2+) as cofactor. O-linked glycan consists of the Man, GlcNAc, GlcU, Glc, GlcU, Rha, Man heptasaccharide.

The catalysed reaction is Hydrolyzes polypeptides on the amino-side of Asp in -Xaa-|-Asp-. Acts very slowly on -Xaa-|-Glu.. In terms of biological role, zinc metallendopeptidase that cleaves preferentially on N-terminal side of aspartate-containing substrates. The sequence is that of Flavastacin from Elizabethkingia meningoseptica (Chryseobacterium meningosepticum).